Consider the following 684-residue polypeptide: MNKKIFSMMAASIIGSAAMTPSAGTNTGEHLTPELFMTLSRVSEMALSPDGKTAVYAVSFPDVKTNKATRELFTVNLDGSGRKQITDTESNEYAPAWMADGKRIAFMSNEGGSMQLWVMNADGTERRQLSNIEGGITGFLFSPDEKQVLFTKDIKFGKRTKDIYPDLDKATGRIITDLMYKHWDEWVETIPHPFIANATDGMITTGKDIMEGEPYEAPMKPWSGIEDFSWSPDGQNIAYASRKKTGMAYSLSTNSDIYIYNLTSGRTHNISEGMMGYDTYPKFSPDGKSIAWISMERDGYESDLKRLFVADLATGKRTHVNPTFDYNVDMIQWAPDSKGIYFLACKEAETNLWEITLKTGKIRQITQGQHDYADFSVRNDVMLAKRHSFELPDDLYRVNPKNGAAQAVTAENKAILDRLTPIACEKRWMKTTDGGNMLTWVVLPPDFDKNKKYPAILYCQGGPQNTVSQFWSFRWNLRLMAEQGYIVIAPNRHGVPGFGQKWNEQISGDYGGQNMRDYLTAVDEMKKEPYVDGDRIGAVGASYGGFSVYWLAGHHDKRFAAFIAHAGIFNLEMQYATTEEMWFANWDIGGPFWEKDNVVAQRTYATSPHKYVQNWDTPILMIHGELDFRILASQAMAAFDAAQLRGVPSEMLIYPDENHWVLQPQNALLFHRTFFGWLDRWLKK.

A signal peptide spans 1-24; the sequence is MNKKIFSMMAASIIGSAAMTPSAG. 3 WD repeats span residues 87–127, 220–259, and 323–363; these read DTES…TERR, KPWSGIEDFSWSPDGQNIAYASRKKTGMAYSLSTNSDIYI, and TFDY…GKIR. Residues S542, D627, and H659 each act as charge relay system in the active site.

This sequence belongs to the peptidase S9C family. In terms of assembly, homodimer.

The protein localises to the periplasm. Functionally, catalyzes the removal of dipeptides from the N-terminus of oligopeptides. Prefers Ala and hydrophobic residues except Pro at the P1 position, and has no preference for P2 residues. Shows high dipeptidyl peptidase activity toward the synthetic substrates Lys-Ala-, Gly-Phe-, Met-Leu-, and Ser-Tyr-methylcoumaryl-7-amide (MCA), and slowly hydrolyzes Val-Tyr-MCA. Is likely involved in amino acid metabolism and bacterial growth of asaccharolytic P.gingivalis, that utilizes amino acids from extracellular proteinaceous nutrients as energy and carbon sources. The sequence is that of Dipeptidyl-peptidase 5 from Porphyromonas gingivalis (strain ATCC 33277 / DSM 20709 / CIP 103683 / JCM 12257 / NCTC 11834 / 2561).